A 291-amino-acid chain; its full sequence is 4-diphosphocytidyl-2-C-methyl-D-erythritol kinase (291 aa).

Lys11 is an active-site residue. 94–104 (PAGSGLGGGSA) provides a ligand contact to ATP. The active site involves Asp136.

Belongs to the GHMP kinase family. IspE subfamily.

The catalysed reaction is 4-CDP-2-C-methyl-D-erythritol + ATP = 4-CDP-2-C-methyl-D-erythritol 2-phosphate + ADP + H(+). It functions in the pathway isoprenoid biosynthesis; isopentenyl diphosphate biosynthesis via DXP pathway; isopentenyl diphosphate from 1-deoxy-D-xylulose 5-phosphate: step 3/6. In terms of biological role, catalyzes the phosphorylation of the position 2 hydroxy group of 4-diphosphocytidyl-2C-methyl-D-erythritol. The chain is 4-diphosphocytidyl-2-C-methyl-D-erythritol kinase from Treponema pallidum (strain Nichols).